The sequence spans 546 residues: Cytochrome P450 monooxygenase fumoB (546 aa).

A helical membrane pass occupies residues 13-33 (LGYYEKLAGILGIIGLVLLFW). N-linked (GlcNAc...) asparagine glycosylation is present at Asn147. Cys488 is a binding site for heme.

This sequence belongs to the cytochrome P450 family. The cofactor is heme.

It is found in the membrane. The protein operates within secondary metabolite biosynthesis. In terms of biological role, cytochrome P450 monooxygenase; part of the gene cluster that mediates the biosynthesis of fumosorinone, a 2-pyridone alkaloid that acts as an inhibitor of protein tyrosine phosphatase 1B which is implicated asa negative regulator of insulin receptor signaling and a potential drug target for the treatment of type II diabetes and other associated metabolic syndromes. The polyketide-amino acid backbone of fumosorinone is first assembled by the PKS-NRPS hybrid fumoS. The PKS modules condense one acetyl-CoA starter unit with 7 malonyl-CoA units, programmed C-methylations occurring after the first 3 and the sixth extensions, and cycles of full reduction occurring after the first 2 extensions. Because fumoS lacks a designated enoyl reductase (ER) domain, the required activity is provided the enoyl reductase fumoC. Upon formation of the polyketide backbone on the thiotemplate, the polyketide is transferred to the NRPS module and linked to tyrosine to produce the acyltetramic acid intermediate called prefumosorinone A. The cytochrome P450 monooxygenase fumoA then probably catalyzes an unprecedented oxidative ring expansion of prefumosorinone A to form prefumosorinone B which contains the 2-pyridone core of fumosorinone. The cytochrome P450 monooxygenase fumoB might hydroxylate the nitrogen of prefumosorinone B, but not the acyltetramic acid prefumosorinone A, to form fumosorinone. The sequence is that of Cytochrome P450 monooxygenase fumoB from Cordyceps fumosorosea (strain ARSEF 2679) (Isaria fumosorosea).